The sequence spans 129 residues: Large ribosomal subunit protein bL12 (129 aa).

The protein belongs to the bacterial ribosomal protein bL12 family. Homodimer. Part of the ribosomal stalk of the 50S ribosomal subunit. Forms a multimeric L10(L12)X complex, where L10 forms an elongated spine to which 2 to 4 L12 dimers bind in a sequential fashion. Binds GTP-bound translation factors.

Its function is as follows. Forms part of the ribosomal stalk which helps the ribosome interact with GTP-bound translation factors. Is thus essential for accurate translation. The protein is Large ribosomal subunit protein bL12 of Maridesulfovibrio salexigens (strain ATCC 14822 / DSM 2638 / NCIMB 8403 / VKM B-1763) (Desulfovibrio salexigens).